Consider the following 228-residue polypeptide: Ephrin-A5 (228 aa).

An N-terminal signal peptide occupies residues 1-20; that stretch reads MLHVEMLTLLFLVLWMCVFS. In terms of domain architecture, Ephrin RBD spans 29-162; sequence ADRYAVYWNS…KLKVFVRPTN (134 aa). N-linked (GlcNAc...) asparagine glycosylation occurs at N37. 2 cysteine pairs are disulfide-bonded: C62-C102 and C90-C151. N162 carries N-linked (GlcNAc...) asparagine; atypical glycosylation. The disordered stretch occupies residues 186–205; it reads EPADDTVHESAEPSRGENAA. Basic and acidic residues predominate over residues 190–200; the sequence is DTVHESAEPSR. N203 carries the GPI-anchor amidated asparagine lipid modification. A propeptide spans 204 to 228 (removed in mature form); the sequence is AAQTPRIPSRLLAILLFLLAMLLTL.

This sequence belongs to the ephrin family. As to quaternary structure, binds to the receptor tyrosine kinases EPHA2, EPHA3 and EPHB1. Forms a ternary EFNA5-EPHA3-ADAM10 complex mediating EFNA5 extracellular domain shedding by ADAM10 which regulates the EFNA5-EPHA3 complex internalization and function. Binds to EPHB2. Interacts with EPHA8; activates EPHA8. Expressed in myogenic progenitor cells.

Its subcellular location is the cell membrane. The protein localises to the membrane. It is found in the caveola. In terms of biological role, cell surface GPI-bound ligand for Eph receptors, a family of receptor tyrosine kinases which are crucial for migration, repulsion and adhesion during neuronal, vascular and epithelial development. Binds promiscuously Eph receptors residing on adjacent cells, leading to contact-dependent bidirectional signaling into neighboring cells. The signaling pathway downstream of the receptor is referred to as forward signaling while the signaling pathway downstream of the ephrin ligand is referred to as reverse signaling. Induces compartmentalized signaling within a caveolae-like membrane microdomain when bound to the extracellular domain of its cognate receptor. This signaling event requires the activity of the Fyn tyrosine kinase. Activates the EPHA3 receptor to regulate cell-cell adhesion and cytoskeletal organization. With the receptor EPHA2 may regulate lens fiber cells shape and interactions and be important for lens transparency maintenance. May function actively to stimulate axon fasciculation. The interaction of EFNA5 with EPHA5 also mediates communication between pancreatic islet cells to regulate glucose-stimulated insulin secretion. Cognate/functional ligand for EPHA7, their interaction regulates brain development modulating cell-cell adhesion and repulsion. In Mus musculus (Mouse), this protein is Ephrin-A5 (Efna5).